The chain runs to 122 residues: Large ribosomal subunit protein uL14 (122 aa).

This sequence belongs to the universal ribosomal protein uL14 family. Part of the 50S ribosomal subunit. Forms a cluster with proteins L3 and L19. In the 70S ribosome, L14 and L19 interact and together make contacts with the 16S rRNA in bridges B5 and B8.

Functionally, binds to 23S rRNA. Forms part of two intersubunit bridges in the 70S ribosome. The chain is Large ribosomal subunit protein uL14 from Pseudomonas entomophila (strain L48).